The primary structure comprises 190 residues: Adenine phosphoribosyltransferase (190 aa).

The protein belongs to the purine/pyrimidine phosphoribosyltransferase family. Homodimer.

It is found in the cytoplasm. It carries out the reaction AMP + diphosphate = 5-phospho-alpha-D-ribose 1-diphosphate + adenine. It participates in purine metabolism; AMP biosynthesis via salvage pathway; AMP from adenine: step 1/1. Catalyzes a salvage reaction resulting in the formation of AMP, that is energically less costly than de novo synthesis. This Treponema pallidum (strain Nichols) protein is Adenine phosphoribosyltransferase.